We begin with the raw amino-acid sequence, 296 residues long: Transmembrane protein 156 (296 aa).

Topologically, residues 1 to 4 are cytoplasmic; it reads MTKT. The helical transmembrane segment at 5 to 25 threads the bilayer; it reads ALLKLFVAIVITFILILPEYF. Residues 26–211 lie on the Extracellular side of the membrane; sequence KTPKERTLEL…EMDIKNITCS (186 aa). N-linked (GlcNAc...) asparagine glycans are attached at residues Asn45 and Asn156. Residues 212–232 traverse the membrane as a helical segment; it reads MKITWYILVLLVFIFLIILTI. The Cytoplasmic segment spans residues 233–296; that stretch reads RKILEGQRRV…QEVLPPIPEL (64 aa).

It localises to the membrane. The polypeptide is Transmembrane protein 156 (TMEM156) (Homo sapiens (Human)).